A 233-amino-acid chain; its full sequence is Cell surface glycoprotein gp42 (233 aa).

The first 16 residues, M1–A16, serve as a signal peptide directing secretion. 2 consecutive Ig-like domains span residues P23–Q98 and P115–S195. 3 N-linked (GlcNAc...) asparagine glycosylation sites follow: N29, N66, and N181. 2 disulfide bridges follow: C40-C88 and C136-C184. G206 is lipidated: GPI-anchor amidated glycine. A propeptide spans T207–F233 (removed in mature form).

As to expression, NK cells.

It localises to the cell membrane. The polypeptide is Cell surface glycoprotein gp42 (Rattus norvegicus (Rat)).